The primary structure comprises 313 residues: Protein-methionine-sulfoxide reductase catalytic subunit MsrP (313 aa).

Positions 1–44 form a signal peptide, tat-type signal; it reads MARWRPDTAEREATPEALYLRRREFLALGAAGAVGLLLPRGARA. Mo-molybdopterin is bound by residues Asn-76, 79–80, Cys-134, Thr-169, Asn-217, Arg-222, and 233–235; these read YE and GAK.

It belongs to the MsrP family. As to quaternary structure, heterodimer of a catalytic subunit (MsrP) and a heme-binding subunit (MsrQ). Mo-molybdopterin serves as cofactor. Predicted to be exported by the Tat system. The position of the signal peptide cleavage has not been experimentally proven.

The protein resides in the periplasm. It catalyses the reaction L-methionyl-[protein] + a quinone + H2O = L-methionyl-(S)-S-oxide-[protein] + a quinol. The catalysed reaction is L-methionyl-[protein] + a quinone + H2O = L-methionyl-(R)-S-oxide-[protein] + a quinol. Functionally, part of the MsrPQ system that repairs oxidized periplasmic proteins containing methionine sulfoxide residues (Met-O), using respiratory chain electrons. Thus protects these proteins from oxidative-stress damage caused by reactive species of oxygen and chlorine generated by the host defense mechanisms. MsrPQ is essential for the maintenance of envelope integrity under bleach stress, rescuing a wide series of structurally unrelated periplasmic proteins from methionine oxidation. The catalytic subunit MsrP is non-stereospecific, being able to reduce both (R-) and (S-) diastereoisomers of methionine sulfoxide. This chain is Protein-methionine-sulfoxide reductase catalytic subunit MsrP, found in Anaeromyxobacter dehalogenans (strain 2CP-C).